The sequence spans 513 residues: Na(+)/H(+) antiporter NhaB (513 aa).

12 consecutive transmembrane segments (helical) span residues 21 to 41 (ICII…SPFV), 64 to 84 (QPGG…AHHV), 88 to 108 (IMAN…IYFM), 119 to 139 (LLIV…SATF), 143 to 163 (FLDA…FYGV), 202 to 222 (LLMH…VGEP), 243 to 263 (LPVS…LEHF), 299 to 318 (MGIQ…LHLA), 322 to 344 (IIGL…HAIG), 350 to 370 (PMPF…IVDL), 389 to 409 (LALF…VFVG), and 477 to 497 (MALP…EFLL).

It belongs to the NhaB Na(+)/H(+) (TC 2.A.34) antiporter family.

The protein localises to the cell inner membrane. The enzyme catalyses 2 Na(+)(in) + 3 H(+)(out) = 2 Na(+)(out) + 3 H(+)(in). Functionally, na(+)/H(+) antiporter that extrudes sodium in exchange for external protons. The chain is Na(+)/H(+) antiporter NhaB from Actinobacillus pleuropneumoniae serotype 3 (strain JL03).